The chain runs to 192 residues: Signal peptidase complex catalytic subunit SEC11C (192 aa).

The Cytoplasmic portion of the chain corresponds to 2–28; sequence VRAGAVGTHLPASGLDIFGDLRKMNKR. The helical; Signal-anchor for type II membrane protein transmembrane segment at 29 to 48 threads the bilayer; that stretch reads QLYYQVLNFAMIVSSALMIW. Residues 49-192 lie on the Lumenal side of the membrane; the sequence is KGLIVLTGSE…GAYVLLKRES (144 aa). Catalysis depends on charge relay system residues Ser68, His108, and Asp134. Positions 177 to 188 are C-terminal short (CTS) helix; it reads ALLAVMGAYVLL.

It belongs to the peptidase S26B family. Component of the signal peptidase complex paralog C (SPC-C) composed of a catalytic subunit SEC11C and three accessory subunits SPCS1, SPCS2 and SPCS3. Within the complex, interacts with SPCS2 and SPCS3. The complex induces a local thinning of the ER membrane which is used to measure the length of the signal peptide (SP) h-region of protein substrates. This ensures the selectivity of the complex towards h-regions shorter than 18-20 amino acids. In terms of processing, may undergo processing at the N-terminus.

The protein resides in the endoplasmic reticulum membrane. It carries out the reaction Cleavage of hydrophobic, N-terminal signal or leader sequences from secreted and periplasmic proteins.. Catalytic component of the signal peptidase complex (SPC) which catalyzes the cleavage of N-terminal signal sequences from nascent proteins as they are translocated into the lumen of the endoplasmic reticulum. Specifically cleaves N-terminal signal peptides that contain a hydrophobic alpha-helix (h-region) shorter than 18-20 amino acids. In Canis lupus familiaris (Dog), this protein is Signal peptidase complex catalytic subunit SEC11C (SEC11C).